Consider the following 206-residue polypeptide: Small ribosomal subunit protein uS4 (206 aa).

One can recognise an S4 RNA-binding domain in the interval 96–156 (RRLDNVVYRM…DKSKNQSRIK (61 aa)).

This sequence belongs to the universal ribosomal protein uS4 family. In terms of assembly, part of the 30S ribosomal subunit. Contacts protein S5. The interaction surface between S4 and S5 is involved in control of translational fidelity.

One of the primary rRNA binding proteins, it binds directly to 16S rRNA where it nucleates assembly of the body of the 30S subunit. In terms of biological role, with S5 and S12 plays an important role in translational accuracy. The polypeptide is Small ribosomal subunit protein uS4 (Buchnera aphidicola subsp. Schizaphis graminum (strain Sg)).